The chain runs to 1792 residues: Protein TIC 214 (1792 aa).

6 helical membrane-spanning segments follow: residues 18–38 (IINS…FSIG), 64–84 (FITG…HLAL), 87–107 (PHII…GNNH), 129–149 (IFFH…SSIL), 165–185 (IFLI…MKWI), and 221–241 (IFLV…PPPF).

It belongs to the TIC214 family. In terms of assembly, part of the Tic complex.

It is found in the plastid. It localises to the chloroplast inner membrane. Involved in protein precursor import into chloroplasts. May be part of an intermediate translocation complex acting as a protein-conducting channel at the inner envelope. The polypeptide is Protein TIC 214 (Glycine max (Soybean)).